Here is a 350-residue protein sequence, read N- to C-terminus: Secreted effector protein PipB2 (350 aa).

Pentapeptide repeat domains follow at residues 162 to 201 (ANLTAENLCDADLSGANLEGAVLFMADCEGANFKGANLSG), 202 to 241 (TSLGDSNFKNACLEDGIMCGATLDHANLTGANLQHASLLG), 247 to 286 (CNCSGANMDHTNLSGATLIRADMSGATLQGATIMAAIMED), and 287 to 326 (AVLTRANLRKASFISTNLDGADLAEANLNNTCFKDCTLTH).

In terms of assembly, interacts with the host kinesin light chain (KLC), a subunit of the kinesin-1 motor complex.

Its subcellular location is the secreted. It localises to the host membrane. In terms of biological role, effector proteins function to alter host cell physiology and promote bacterial survival in host tissues. Involved in the reorganization of late endosome/lysosome (LE/Lys) compartments in mammalian cells. Necessary and sufficient to link kinesin-1 onto the Salmonella-containing vacuole (SCV) membrane. Required for centrifugal extension of lysosomal glycoprotein-rich membrane tubules, known as Salmonella-induced filaments (Sifs), away from the SCV and toward the cell periphery. Required for virulence, but not for intracellular survival and replication in phagocytic cells. This Salmonella paratyphi A (strain ATCC 9150 / SARB42) protein is Secreted effector protein PipB2 (pipB2).